The primary structure comprises 428 residues: 3-phosphoshikimate 1-carboxyvinyltransferase (428 aa).

Residues lysine 22, serine 23, and arginine 27 each coordinate 3-phosphoshikimate. Lysine 22 serves as a coordination point for phosphoenolpyruvate. Positions 98 and 126 each coordinate phosphoenolpyruvate. 3-phosphoshikimate is bound by residues serine 172, serine 173, glutamine 174, serine 200, aspartate 316, asparagine 339, and lysine 343. Glutamine 174 serves as a coordination point for phosphoenolpyruvate. Aspartate 316 serves as the catalytic Proton acceptor. Phosphoenolpyruvate-binding residues include arginine 347, arginine 389, and lysine 414.

The protein belongs to the EPSP synthase family. Monomer.

The protein resides in the cytoplasm. It catalyses the reaction 3-phosphoshikimate + phosphoenolpyruvate = 5-O-(1-carboxyvinyl)-3-phosphoshikimate + phosphate. It functions in the pathway metabolic intermediate biosynthesis; chorismate biosynthesis; chorismate from D-erythrose 4-phosphate and phosphoenolpyruvate: step 6/7. Functionally, catalyzes the transfer of the enolpyruvyl moiety of phosphoenolpyruvate (PEP) to the 5-hydroxyl of shikimate-3-phosphate (S3P) to produce enolpyruvyl shikimate-3-phosphate and inorganic phosphate. The polypeptide is 3-phosphoshikimate 1-carboxyvinyltransferase (Psychromonas ingrahamii (strain DSM 17664 / CCUG 51855 / 37)).